The chain runs to 421 residues: Testin (421 aa).

The region spanning 92 to 199 (MILTNPVAAR…GDVKLPCELD (108 aa)) is the PET domain. Residues 134–164 (KQPVAGSEGAQYRKKQLAKQLPAHDQDPSKC) form a disordered region. Over residues 155 to 164 (PAHDQDPSKC) the composition is skewed to basic and acidic residues. LIM zinc-binding domains lie at 234–297 (YSCY…CDSE), 299–359 (PRCA…NHAV), and 362–421 (QGCH…KMMS).

Belongs to the prickle / espinas / testin family. Interacts via LIM domain 1 with ZYX. Interacts (via LIM domain 3) with ENAH and VASP. Interacts with ALKBH4, talin, actin, alpha-actinin, GRIP1 and PXN. Interacts (via LIM domain 2) with ACTL7A (via N-terminus). Heterodimer with ACTL7A; the heterodimer interacts with ENAH to form a heterotrimer.

Its subcellular location is the cytoplasm. The protein localises to the cell junction. The protein resides in the focal adhesion. Functionally, scaffold protein that may play a role in cell adhesion, cell spreading and in the reorganization of the actin cytoskeleton. Plays a role in the regulation of cell proliferation. May act as a tumor suppressor. The chain is Testin (TES) from Eulemur macaco macaco (Black lemur).